A 674-amino-acid polypeptide reads, in one-letter code: Endopolyphosphatase (674 aa).

Residues 1–21 lie on the Cytoplasmic side of the membrane; sequence MVVVGKSEVRNVSMSRPKKKS. 2 consecutive propeptides (removed in mature form) follow at residues 1–83 and 385–674; these read MVVV…VIIK and EQST…YKDD. Lys6 participates in a covalent cross-link: Glycyl lysine isopeptide (Lys-Gly) (interchain with G-Cter in ubiquitin). The chain crosses the membrane as a helical; Signal-anchor for type II membrane protein span at residues 22-42; it reads LIAILSTCVLFFLVFIIGAKF. The Vacuolar portion of the chain corresponds to 43-674; it reads QYVSVFSKFL…SFASSGYKDD (632 aa). Asn58 is a glycosylation site (N-linked (GlcNAc...) asparagine). The tract at residues 384–403 is disordered; that stretch reads MEQSTRVQQGEDSNEEDEET. N-linked (GlcNAc...) asparagine glycans are attached at residues Asn505 and Asn511.

The protein belongs to the endopolyphosphatase PPN1 family. Homotetramer. Interacts with PPN2. Requires Mn(2+) as cofactor. Mg(2+) serves as cofactor. It depends on Co(2+) as a cofactor. Zn(2+) is required as a cofactor. Post-translationally, processing by proteases in the vacuole is required for activation. In terms of processing, ubiquitinated. Ubiquitination mediates sorting into internal vesicles in late endosomes. TUL1 and RSP5 are required for ubiquitination. Other cytoplasmic Lys residues than Lys-6 may also be ubiquitinated. N-glycosylated. N-glycosylation is essential for the protease-mediated maturation.

It localises to the vacuole membrane. The protein resides in the cytoplasm. It carries out the reaction [phosphate](n+1) + n H2O = (n+1) phosphate + n H(+). The catalysed reaction is [phosphate](n) + H2O = [phosphate](n-1) + phosphate + H(+). The enzyme catalyses dATP + H2O = dADP + phosphate + H(+). Inhibited by heparin and EDTA. Its function is as follows. Catalyzes the hydrolysis of inorganic polyphosphate (polyP) chains of many hundreds of phosphate residues into shorter lengths. Has both exopolyphosphatase and endopolyphosphatase activities at different ratios depending on divalent cations by cleaving phosphate from the chain end and by fragmenting long-chain polymers into shorter ones, respectively. The limited digestion products are 1 and 3 P(i) residues. Also releases phosphate from dATP. dATP phosphohydrolase activity is about 7-fold lower than the exopolyphosphatase activity. The sequence is that of Endopolyphosphatase from Saccharomyces cerevisiae (strain ATCC 204508 / S288c) (Baker's yeast).